Reading from the N-terminus, the 405-residue chain is Argininosuccinate synthase (405 aa).

Residues 10-18 (AYSGGLDTS) and alanine 37 contribute to the ATP site. L-citrulline-binding residues include tyrosine 88 and serine 93. Glycine 118 lines the ATP pocket. L-aspartate contacts are provided by threonine 120, asparagine 124, and aspartate 125. L-citrulline is bound at residue asparagine 124. Residues arginine 128, serine 179, serine 188, glutamate 264, and tyrosine 276 each coordinate L-citrulline.

The protein belongs to the argininosuccinate synthase family. Type 1 subfamily. Homotetramer.

The protein resides in the cytoplasm. It carries out the reaction L-citrulline + L-aspartate + ATP = 2-(N(omega)-L-arginino)succinate + AMP + diphosphate + H(+). The protein operates within amino-acid biosynthesis; L-arginine biosynthesis; L-arginine from L-ornithine and carbamoyl phosphate: step 2/3. This Pseudomonas fluorescens (strain ATCC BAA-477 / NRRL B-23932 / Pf-5) protein is Argininosuccinate synthase.